We begin with the raw amino-acid sequence, 269 residues long: Protein shisa-1 (269 aa).

The N-terminal stretch at 1–18 (MEFIVLLTVCALLGLSCG) is a signal peptide. The Extracellular portion of the chain corresponds to 19–98 (QHGEYCHGWT…LPPTVPTYFP (80 aa)). The helical transmembrane segment at 99–119 (FLLVGSIFVSFVILGSLVGLC) threads the bilayer. The Cytoplasmic portion of the chain corresponds to 120–269 (CCKCLKPEDD…TVCSGSPSKC (150 aa)). Residues 129 to 167 (DTQVSGPAPIQSRLLDQDPSTDTSRHSSSSSASMPRPPI) are disordered. Positions 146–162 (DPSTDTSRHSSSSSASM) are enriched in low complexity.

This sequence belongs to the shisa family. In terms of assembly, interacts with immature forms of fzd8 and fgfr.

The protein resides in the endoplasmic reticulum. It is found in the membrane. Required for head formation during gastrulation. Functions as an inhibitor for the caudalizing signals wnt and fgf, does not inhibit bmp, activin and nodal signaling in head formation process. Induces retention of fzd8 in the endoplasmic reticulum and inhibits trafficking of fzd8 to the cell surface. This Xenopus laevis (African clawed frog) protein is Protein shisa-1 (shisa1).